Reading from the N-terminus, the 740-residue chain is Polyribonucleotide nucleotidyltransferase (740 aa).

Mg(2+) is bound by residues aspartate 496 and aspartate 502. Residues 563-622 (PAIIRTSIHPDKIRDIIGPGGKIIKKLVEETGADIDIEDDGRVFIAAVDREKGKRALEII) enclose the KH domain. The 75-residue stretch at 632 to 706 (GKLYNGKVTR…QQGRLKLSKK (75 aa)) folds into the S1 motif domain. The tract at residues 707-740 (EAMRDMGLAPAESTSEQPEKRERRPFSRPKATKE) is disordered. The segment covering 723–740 (QPEKRERRPFSRPKATKE) has biased composition (basic and acidic residues).

It belongs to the polyribonucleotide nucleotidyltransferase family. Mg(2+) is required as a cofactor.

The protein resides in the cytoplasm. The enzyme catalyses RNA(n+1) + phosphate = RNA(n) + a ribonucleoside 5'-diphosphate. Involved in mRNA degradation. Catalyzes the phosphorolysis of single-stranded polyribonucleotides processively in the 3'- to 5'-direction. The polypeptide is Polyribonucleotide nucleotidyltransferase (Desulforamulus reducens (strain ATCC BAA-1160 / DSM 100696 / MI-1) (Desulfotomaculum reducens)).